The sequence spans 365 residues: Aminomethyltransferase (365 aa).

The protein belongs to the GcvT family. As to quaternary structure, the glycine cleavage system is composed of four proteins: P, T, L and H.

The enzyme catalyses N(6)-[(R)-S(8)-aminomethyldihydrolipoyl]-L-lysyl-[protein] + (6S)-5,6,7,8-tetrahydrofolate = N(6)-[(R)-dihydrolipoyl]-L-lysyl-[protein] + (6R)-5,10-methylene-5,6,7,8-tetrahydrofolate + NH4(+). The glycine cleavage system catalyzes the degradation of glycine. The sequence is that of Aminomethyltransferase from Halalkalibacterium halodurans (strain ATCC BAA-125 / DSM 18197 / FERM 7344 / JCM 9153 / C-125) (Bacillus halodurans).